The primary structure comprises 161 residues: GTP-dependent dephospho-CoA kinase (161 aa).

The GTP site is built by aspartate 40, valine 41, valine 42, aspartate 59, glutamate 112, and glutamate 135.

This sequence belongs to the GTP-dependent DPCK family.

The enzyme catalyses 3'-dephospho-CoA + GTP = GDP + CoA + H(+). Its pathway is cofactor biosynthesis; coenzyme A biosynthesis. Its function is as follows. Catalyzes the GTP-dependent phosphorylation of the 3'-hydroxyl group of dephosphocoenzyme A to form coenzyme A (CoA). This is GTP-dependent dephospho-CoA kinase from Methanocorpusculum labreanum (strain ATCC 43576 / DSM 4855 / Z).